Reading from the N-terminus, the 208-residue chain is Component of Sp100-rs (208 aa).

The HSR domain occupies G6–K121.

This Mus musculus (Mouse) protein is Component of Sp100-rs (Csprs).